Consider the following 882-residue polypeptide: Isoamylase 2, chloroplastic (882 aa).

The N-terminal 70 residues, 1–70 (MAAWSPSVGI…LQSYQFSKIC (70 aa)), are a transit peptide targeting the chloroplast.

This sequence belongs to the glycosyl hydrolase 13 family. As to quaternary structure, associates with ISA1 to form the heteromultimeric complex Iso1 required for amylopectin synthesis.

It is found in the plastid. Its subcellular location is the chloroplast. Its pathway is glycan biosynthesis; starch biosynthesis. Its function is as follows. Involved in the trimming of pre-amylopectin chains. Accelerates the crystallization of nascent amylopectin molecules during starch synthesis. ISA1 and ISA2 work exclusively together as a multimeric holoenzyme. ISA1-ISA2 removes preferentially branches that are very close to other branches. The sequence is that of Isoamylase 2, chloroplastic (ISA2) from Arabidopsis thaliana (Mouse-ear cress).